The chain runs to 832 residues: Leucine--tRNA ligase (832 aa).

The 'HIGH' region motif lies at 58–68 (PYPSGDLHMGH). Positions 598 to 602 (AMSKS) match the 'KMSKS' region motif. Residue lysine 601 participates in ATP binding.

This sequence belongs to the class-I aminoacyl-tRNA synthetase family.

It is found in the cytoplasm. The catalysed reaction is tRNA(Leu) + L-leucine + ATP = L-leucyl-tRNA(Leu) + AMP + diphosphate. This chain is Leucine--tRNA ligase, found in Acidothermus cellulolyticus (strain ATCC 43068 / DSM 8971 / 11B).